Here is a 463-residue protein sequence, read N- to C-terminus: tRNA (guanine(10)-N(2))-methyltransferase TRMT11 (463 aa).

Ala2 is subject to N-acetylalanine.

The protein belongs to the class I-like SAM-binding methyltransferase superfamily. TRM11 methyltransferase family. Part of the heterodimeric TRMT11-TRM112 methyltransferase complex; this complex forms an active tRNA methyltransferase, where TRMT112 acts as an activator of the catalytic subunit TRMT11.

The protein localises to the cytoplasm. The enzyme catalyses guanosine(10) in tRNA + S-adenosyl-L-methionine = N(2)-methylguanosine(10) in tRNA + S-adenosyl-L-homocysteine + H(+). In terms of biological role, catalytic subunit of the TRMT11-TRM112 methyltransferase complex, that specifically mediates the S-adenosyl-L-methionine-dependent N(2)-methylation of guanosine nucleotide at position 10 (m2G10) in tRNAs. This is one of the major tRNA (guanine-N(2))-methyltransferases. This chain is tRNA (guanine(10)-N(2))-methyltransferase TRMT11, found in Pongo abelii (Sumatran orangutan).